The sequence spans 309 residues: MVFPAKRLCVVPYMEGVRWAFSCGTWLPSPAEWLLAVRSIQPEEKERIGQFVFARDAKAALAGRLMIRKLVAEKLNIPWDHIRLQRTSKGKPILAKDTLNPYPNFNFNISHQGDYTVLAAEPELQVGIDIMKTSFPGRGSIPEFFHIMKRKFTNKEWETIRSFNDEWSQLDMFYRHWALKESFIKAIGVGLGFEMQRLEFDVSPLSMDIGQVYKETRLILDGEEEKEWAFEESKIDQHHFVAVALRKPDGSRHQNVSYQDDSKPSQRQFTILNFNDLIASAIPMTPEDPSFWDCFCFTEEILIRNGSKS.

Residues R47, 86-91 (RTSKGK), and 108-111 (NISH) contribute to the CoA site. The Mg(2+) site is built by D129 and E181. Residue 181-185 (ESFIK) participates in CoA binding.

The protein belongs to the P-Pant transferase superfamily. AcpS family. Monomer. Mg(2+) serves as cofactor.

Its subcellular location is the cytoplasm. The protein resides in the cytosol. The enzyme catalyses apo-[ACP] + CoA = holo-[ACP] + adenosine 3',5'-bisphosphate + H(+). The catalysed reaction is apo-[ACP] + acetyl-CoA = acetyl-[ACP] + adenosine 3',5'-bisphosphate + H(+). Catalyzes the post-translational modification of target proteins by phosphopantetheine. Can transfer the 4'-phosphopantetheine moiety from coenzyme A, regardless of whether the CoA is presented in the free thiol form or as an acetyl thioester, to a serine residue of a broad range of acceptors including the acyl carrier domain of FASN. This Rattus norvegicus (Rat) protein is L-aminoadipate-semialdehyde dehydrogenase-phosphopantetheinyl transferase (Aasdhppt).